A 342-amino-acid chain; its full sequence is 4-hydroxy-2-oxovalerate aldolase (342 aa).

The 253-residue stretch at Ile8–Gln260 folds into the Pyruvate carboxyltransferase domain. Arg16 to Asp17 contributes to the substrate binding site. Asp17 provides a ligand contact to Mn(2+). Residue His20 is the Proton acceptor of the active site. Substrate-binding residues include Ser170 and His199. Mn(2+) contacts are provided by His199 and His201. Tyr290 provides a ligand contact to substrate.

The protein belongs to the 4-hydroxy-2-oxovalerate aldolase family.

It catalyses the reaction (S)-4-hydroxy-2-oxopentanoate = acetaldehyde + pyruvate. This Albidiferax ferrireducens (strain ATCC BAA-621 / DSM 15236 / T118) (Rhodoferax ferrireducens) protein is 4-hydroxy-2-oxovalerate aldolase.